We begin with the raw amino-acid sequence, 430 residues long: Enolase (430 aa).

Q165 is a (2R)-2-phosphoglycerate binding site. E207 functions as the Proton donor in the catalytic mechanism. 3 residues coordinate Mg(2+): D244, E287, and D314. 4 residues coordinate (2R)-2-phosphoglycerate: K339, R368, S369, and K390. K339 acts as the Proton acceptor in catalysis.

This sequence belongs to the enolase family. As to quaternary structure, component of the RNA degradosome, a multiprotein complex involved in RNA processing and mRNA degradation. It depends on Mg(2+) as a cofactor.

It is found in the cytoplasm. It localises to the secreted. Its subcellular location is the cell surface. It catalyses the reaction (2R)-2-phosphoglycerate = phosphoenolpyruvate + H2O. It participates in carbohydrate degradation; glycolysis; pyruvate from D-glyceraldehyde 3-phosphate: step 4/5. Catalyzes the reversible conversion of 2-phosphoglycerate (2-PG) into phosphoenolpyruvate (PEP). It is essential for the degradation of carbohydrates via glycolysis. This Xanthomonas axonopodis pv. citri (strain 306) protein is Enolase.